The sequence spans 279 residues: Movement protein (279 aa).

Belongs to the cucumovirus movement protein family.

The protein resides in the host cell junction. Its subcellular location is the host plasmodesma. Its function is as follows. Transports viral genome to neighboring plant cells directly through plasmosdesmata, without any budding. The movement protein allows efficient cell to cell propagation, by bypassing the host cell wall barrier. Acts by forming a tubular structure at the host plasmodesmata, enlarging it enough to allow free passage of virion capsids. This chain is Movement protein, found in Cucumber mosaic virus (strain As) (CMV).